Here is a 64-residue protein sequence, read N- to C-terminus: Large ribosomal subunit protein bL33 (64 aa).

It belongs to the bacterial ribosomal protein bL33 family.

This Synechococcus sp. (strain JA-2-3B'a(2-13)) (Cyanobacteria bacterium Yellowstone B-Prime) protein is Large ribosomal subunit protein bL33.